Here is a 92-residue protein sequence, read N- to C-terminus: Small ribosomal subunit protein uS19c (92 aa).

Belongs to the universal ribosomal protein uS19 family.

It localises to the plastid. It is found in the chloroplast. Its function is as follows. Protein S19 forms a complex with S13 that binds strongly to the 16S ribosomal RNA. This chain is Small ribosomal subunit protein uS19c, found in Fagopyrum esculentum subsp. ancestrale (Wild buckwheat).